The chain runs to 121 residues: Neuromedin-B (121 aa).

The signal sequence occupies residues 1-24 (MTLRAVGVRLLGGLLLFALLAAGA). The residue at position 56 (Met56) is a Methionine amide. The propeptide occupies 60–121 (SLEPPSPSLL…RRLLVQTLQK (62 aa)). The segment at 61–80 (LEPPSPSLLGTAPHTSLRDQ) is disordered.

It belongs to the bombesin/neuromedin-B/ranatensin family.

The protein resides in the secreted. It localises to the cell projection. Its subcellular location is the neuron projection. Stimulates smooth muscle contraction. Induces sighing by acting directly on the pre-Botzinger complex, a cluster of several thousand neurons in the ventrolateral medulla responsible for inspiration during respiratory activity. Contributes to the induction of sneezing following exposure to chemical irritants or allergens which causes release of NMB by nasal sensory neurons and activation of NMBR-expressing neurons in the sneeze-evoking region of the brainstem. These in turn activate neurons of the caudal ventral respiratory group, giving rise to the sneezing response. Contributes to induction of acute itch, possibly through activation of the NMBR receptor on dorsal root ganglion neurons. Increases expression of NMBR and steroidogenic mediators STAR, CYP11A1 and HSD3B1 in Leydig cells, induces secretion of testosterone by Leydig cells and also promotes Leydig cell proliferation. Plays a role in the innate immune response to influenza A virus infection by enhancing interferon alpha expression and reducing expression of IL6. Plays a role in CSF1-induced proliferation of osteoclast precursors by contributing to the positive regulation of the expression of the CSF1 receptor CSF1R. In Bos taurus (Bovine), this protein is Neuromedin-B (NMB).